The sequence spans 878 residues: Protein argonaute 6 (878 aa).

Low complexity predominate over residues 1–17 (METSSSLPLSPISIEPE). The interval 1 to 25 (METSSSLPLSPISIEPEQPSHRDYD) is disordered. Positions 259-372 (PVIEFLKANQ…LPLEFCNLVS (114 aa)) constitute a PAZ domain. One can recognise a Piwi domain in the interval 541–851 (FILCILPERK…AAAQVAQFTK (311 aa)).

It belongs to the argonaute family. Ago subfamily. In terms of tissue distribution, expressed in roots, cotyledons and shoot meristematic region.

It localises to the nucleus. In terms of biological role, involved in transcriptional gene silencing (TGS). Component of the RISC complex that associate with the small interfering RNA (siRNA) pathway involved in direct cytosine methylation at endogenous DNA repeats. Required for the accumulation of specific siRNAs derived from transgene and heterochromatin-related endogenous loci. Involved in RNA-directed DNA methylation (RdDM) at specific endogenous loci. Probably not required for the accumulation of siRNAs derived from transgene inverted repeats that induce post-transcriptional gene silencing (PTGS). Associates mainly with small RNAs of 24 nucleotide in length and preferentially recruits small RNAs with a 5' terminal adenosine. Targeted by turnip yellows virus (TuYV) protein P0 (via F-box-like domain) for probable proteasome degradation and thereby inactivating AGO6 function in RNA silencing. The chain is Protein argonaute 6 (AGO6) from Arabidopsis thaliana (Mouse-ear cress).